The primary structure comprises 143 residues: Transcriptional regulator MraZ (143 aa).

SpoVT-AbrB domains follow at residues 5–47 (EFEH…PLSE) and 76–119 (AVQC…NKAR).

The protein belongs to the MraZ family. As to quaternary structure, forms oligomers.

It localises to the cytoplasm. Its subcellular location is the nucleoid. This is Transcriptional regulator MraZ from Pediococcus pentosaceus (strain ATCC 25745 / CCUG 21536 / LMG 10740 / 183-1w).